Reading from the N-terminus, the 399-residue chain is Glucose-1-phosphate adenylyltransferase (399 aa).

Residues Tyr100, Gly165, 180–181 (EK), and Ser191 contribute to the alpha-D-glucose 1-phosphate site.

Belongs to the bacterial/plant glucose-1-phosphate adenylyltransferase family. Homotetramer.

The enzyme catalyses alpha-D-glucose 1-phosphate + ATP + H(+) = ADP-alpha-D-glucose + diphosphate. Its pathway is glycan biosynthesis; glycogen biosynthesis. Functionally, involved in the biosynthesis of ADP-glucose, a building block required for the elongation reactions to produce glycogen. Catalyzes the reaction between ATP and alpha-D-glucose 1-phosphate (G1P) to produce pyrophosphate and ADP-Glc. The polypeptide is Glucose-1-phosphate adenylyltransferase (Desulforamulus reducens (strain ATCC BAA-1160 / DSM 100696 / MI-1) (Desulfotomaculum reducens)).